A 171-amino-acid chain; its full sequence is Co-chaperone protein HscB (171 aa).

Residues 2–74 (DYFTLFGLPA…LTRAEYLLSL (73 aa)) form the J domain.

It belongs to the HscB family. In terms of assembly, interacts with HscA and stimulates its ATPase activity. Interacts with IscU.

Its function is as follows. Co-chaperone involved in the maturation of iron-sulfur cluster-containing proteins. Seems to help targeting proteins to be folded toward HscA. In Salmonella choleraesuis (strain SC-B67), this protein is Co-chaperone protein HscB.